A 218-amino-acid chain; its full sequence is MRVILLGAPGAGKGTQAQFIKEQFNIPQISTGDMLRAAVKAGTPLGLEAKKVMDAGGLVSDDIILGLVKERITENDCANGFLFDGFPRTIPQAQSLVEQGVDIDFVVEIDVDDEEIIERLSGRRVHPASGRVYHTKYNPPKVEGKDDETGDELVQRDDDQEETVRKRLEVYQAQTRPLVDFYQDLATQGESNAPRYVRVAGVGSVDDIRDRVLSALKG.

10–15 contributes to the ATP binding site; it reads GAGKGT. The NMP stretch occupies residues 30–59; sequence STGDMLRAAVKAGTPLGLEAKKVMDAGGLV. AMP contacts are provided by residues T31, R36, 57–59, 85–88, and Q92; these read GLV and GFPR. Residues 122 to 159 are LID; sequence GRRVHPASGRVYHTKYNPPKVEGKDDETGDELVQRDDD. ATP is bound by residues R123 and 132 to 133; that span reads VY. Residues 139 to 160 form a disordered region; it reads PPKVEGKDDETGDELVQRDDDQ. AMP is bound by residues R156 and R167. Residue G203 participates in ATP binding.

The protein belongs to the adenylate kinase family. In terms of assembly, monomer.

Its subcellular location is the cytoplasm. The enzyme catalyses AMP + ATP = 2 ADP. Its pathway is purine metabolism; AMP biosynthesis via salvage pathway; AMP from ADP: step 1/1. Functionally, catalyzes the reversible transfer of the terminal phosphate group between ATP and AMP. Plays an important role in cellular energy homeostasis and in adenine nucleotide metabolism. In Alcanivorax borkumensis (strain ATCC 700651 / DSM 11573 / NCIMB 13689 / SK2), this protein is Adenylate kinase.